The chain runs to 437 residues: Aromatic peroxidase fscJ (437 aa).

Residues 1–19 (MKWLHLLSVVACVADEVYA) form the signal peptide. Cys-83 is a heme binding site.

This sequence belongs to the chloroperoxidase family. Heme b serves as cofactor.

The protein operates within secondary metabolite biosynthesis. Functionally, aromatic peroxidase; part of the fragmented gene cluster that mediates the biosynthesis of fusarochromene, a tryptophan-derived metabolite closely related to a group of mycotoxins including fusarochromanone. The role of fscJ within the pathway has not been identified yet. The first step of the pathway is the epimerization of L-tryptophan to D-tryptophan in the presence of the NRPS-like tryptophan epimerase fscC. D-tryptophan is subsequently hydroxylated by the tryptophan 6-hydroxylase fscE to yield 6-hydroxytryptophan. The pyrrole ring undergoes cleavaged by the tryptophan 2,3-dioxygenase fscD and is finally converted to 4-hydroxykyrunenine by the hydrolase fscH. The NRPS-like oxidoreductase fscA reduces the carboxyl group to primary alcohol and the DMATS-type prenyltransferase fscG performs prenylation, followed by the formation of a chromene ring catalyzed by the oxidoreductase fscI, which leads to desacetylfusarochromene. Epoxidation by fscF and rearrangement reactions of chromene double bonds convert compound desacetylfusarochromene to fusarochromanones. Although specific acetyltransferases were not found near the fsc gene cluster, several predicted enzymes containing the N-acetyltransferase superfamily domain are present in the genome of F.equiseti. These predicted enzymes may have the potential to convert desacetylfusarochromene to fusarochromene. The polypeptide is Aromatic peroxidase fscJ (Fusarium equiseti (Fusarium scirpi)).